A 379-amino-acid polypeptide reads, in one-letter code: 4-hydroxy-3-methylbut-2-enyl diphosphate reductase (379 aa).

Residue cysteine 39 participates in [4Fe-4S] cluster binding. Histidine 69 contacts (2E)-4-hydroxy-3-methylbut-2-enyl diphosphate. Histidine 69 provides a ligand contact to dimethylallyl diphosphate. Histidine 69 contacts isopentenyl diphosphate. Residue cysteine 130 coordinates [4Fe-4S] cluster. A (2E)-4-hydroxy-3-methylbut-2-enyl diphosphate-binding site is contributed by histidine 158. A dimethylallyl diphosphate-binding site is contributed by histidine 158. Histidine 158 is an isopentenyl diphosphate binding site. The active-site Proton donor is glutamate 160. A (2E)-4-hydroxy-3-methylbut-2-enyl diphosphate-binding site is contributed by threonine 223. Cysteine 261 contacts [4Fe-4S] cluster. 4 residues coordinate (2E)-4-hydroxy-3-methylbut-2-enyl diphosphate: serine 290, serine 291, asparagine 292, and serine 352. Serine 290, serine 291, asparagine 292, and serine 352 together coordinate dimethylallyl diphosphate. 4 residues coordinate isopentenyl diphosphate: serine 290, serine 291, asparagine 292, and serine 352.

It belongs to the IspH family. It depends on [4Fe-4S] cluster as a cofactor.

The enzyme catalyses isopentenyl diphosphate + 2 oxidized [2Fe-2S]-[ferredoxin] + H2O = (2E)-4-hydroxy-3-methylbut-2-enyl diphosphate + 2 reduced [2Fe-2S]-[ferredoxin] + 2 H(+). The catalysed reaction is dimethylallyl diphosphate + 2 oxidized [2Fe-2S]-[ferredoxin] + H2O = (2E)-4-hydroxy-3-methylbut-2-enyl diphosphate + 2 reduced [2Fe-2S]-[ferredoxin] + 2 H(+). It functions in the pathway isoprenoid biosynthesis; dimethylallyl diphosphate biosynthesis; dimethylallyl diphosphate from (2E)-4-hydroxy-3-methylbutenyl diphosphate: step 1/1. Its pathway is isoprenoid biosynthesis; isopentenyl diphosphate biosynthesis via DXP pathway; isopentenyl diphosphate from 1-deoxy-D-xylulose 5-phosphate: step 6/6. Catalyzes the conversion of 1-hydroxy-2-methyl-2-(E)-butenyl 4-diphosphate (HMBPP) into a mixture of isopentenyl diphosphate (IPP) and dimethylallyl diphosphate (DMAPP). Acts in the terminal step of the DOXP/MEP pathway for isoprenoid precursor biosynthesis. The protein is 4-hydroxy-3-methylbut-2-enyl diphosphate reductase of Synechocystis sp. (strain ATCC 27184 / PCC 6803 / Kazusa).